We begin with the raw amino-acid sequence, 262 residues long: Hemin import ATP-binding protein HmuV (262 aa).

The ABC transporter domain occupies 3 to 244 (LQARNLTLAR…DHMRRVYGIE (242 aa)). Residue 35–42 (GANGAGKS) participates in ATP binding.

The protein belongs to the ABC transporter superfamily. Heme (hemin) importer (TC 3.A.1.14.5) family. As to quaternary structure, the complex is composed of two ATP-binding proteins (HmuV), two transmembrane proteins (HmuU) and a solute-binding protein (HmuT).

The protein resides in the cell inner membrane. Functionally, part of the ABC transporter complex HmuTUV involved in hemin import. Responsible for energy coupling to the transport system. In Bordetella pertussis (strain Tohama I / ATCC BAA-589 / NCTC 13251), this protein is Hemin import ATP-binding protein HmuV.